The primary structure comprises 711 residues: Ribosomal RNA large subunit methyltransferase K/L (711 aa).

The region spanning 43-154 (LGYRITLWSR…RGQITIGLNF (112 aa)) is the THUMP domain.

The protein belongs to the methyltransferase superfamily. RlmKL family.

Its subcellular location is the cytoplasm. The enzyme catalyses guanosine(2445) in 23S rRNA + S-adenosyl-L-methionine = N(2)-methylguanosine(2445) in 23S rRNA + S-adenosyl-L-homocysteine + H(+). It catalyses the reaction guanosine(2069) in 23S rRNA + S-adenosyl-L-methionine = N(2)-methylguanosine(2069) in 23S rRNA + S-adenosyl-L-homocysteine + H(+). Its function is as follows. Specifically methylates the guanine in position 2445 (m2G2445) and the guanine in position 2069 (m7G2069) of 23S rRNA. The polypeptide is Ribosomal RNA large subunit methyltransferase K/L (Shewanella sediminis (strain HAW-EB3)).